Here is a 264-residue protein sequence, read N- to C-terminus: Thymidylate synthase (264 aa).

Arg-21 contacts dUMP. His-51 is a binding site for (6R)-5,10-methylene-5,6,7,8-tetrahydrofolate. 126 to 127 lines the dUMP pocket; it reads RR. Residue Cys-146 is the Nucleophile of the active site. DUMP is bound by residues 166 to 169, Asn-177, and 207 to 209; these read RSCD and HLY. Residue Asp-169 coordinates (6R)-5,10-methylene-5,6,7,8-tetrahydrofolate. Ser-263 provides a ligand contact to (6R)-5,10-methylene-5,6,7,8-tetrahydrofolate.

The protein belongs to the thymidylate synthase family. Bacterial-type ThyA subfamily. Homodimer.

The protein localises to the cytoplasm. The enzyme catalyses dUMP + (6R)-5,10-methylene-5,6,7,8-tetrahydrofolate = 7,8-dihydrofolate + dTMP. The protein operates within pyrimidine metabolism; dTTP biosynthesis. Its function is as follows. Catalyzes the reductive methylation of 2'-deoxyuridine-5'-monophosphate (dUMP) to 2'-deoxythymidine-5'-monophosphate (dTMP) while utilizing 5,10-methylenetetrahydrofolate (mTHF) as the methyl donor and reductant in the reaction, yielding dihydrofolate (DHF) as a by-product. This enzymatic reaction provides an intracellular de novo source of dTMP, an essential precursor for DNA biosynthesis. The sequence is that of Thymidylate synthase from Wigglesworthia glossinidia brevipalpis.